We begin with the raw amino-acid sequence, 217 residues long: Uracil-DNA glycosylase (217 aa).

Catalysis depends on D62, which acts as the Proton acceptor.

It belongs to the uracil-DNA glycosylase (UDG) superfamily. UNG family.

The protein localises to the cytoplasm. It catalyses the reaction Hydrolyzes single-stranded DNA or mismatched double-stranded DNA and polynucleotides, releasing free uracil.. Its function is as follows. Excises uracil residues from the DNA which can arise as a result of misincorporation of dUMP residues by DNA polymerase or due to deamination of cytosine. In Streptococcus pyogenes serotype M18 (strain MGAS8232), this protein is Uracil-DNA glycosylase.